Here is a 1561-residue protein sequence, read N- to C-terminus: Synemin (1561 aa).

The interval 1-10 (MLSWRLQTGS) is head. The segment at 11–49 (EKAELQELNARLYDYVCRVRELERENLLLEEELRSRLSR) is coil 1A. Positions 11–320 (EKAELQELNA…YRALLEGESN (310 aa)) are interaction with DMD and UTRN. Residues 11–322 (EKAELQELNA…ALLEGESNPE (312 aa)) enclose the IF rod domain. The interval 50–58 (EDRWAEDQA) is linker 1. Positions 59–163 (LYAEEARSLR…DLRARAASLT (105 aa)) are coil 1B. Residues 164–186 (MHFRARATSPAAPPPRLRDVHDS) are linker 12. Residues 187–300 (YALLVAESWR…LRDYQELLQV (114 aa)) form a coil 2 region. A tail region spans residues 301-1561 (KTGLSLEVAT…EEEEEGEGWF (1261 aa)). Composition is skewed to polar residues over residues 371 to 390 (SSAS…TTAV) and 401 to 421 (SRHS…KTIS). Disordered regions lie at residues 371 to 421 (SSAS…KTIS), 549 to 574 (DARK…RSVK), and 591 to 637 (EVST…DSTT). The segment covering 601 to 624 (GRKDVSHSGGREAETKETRFRLDT) has biased composition (basic and acidic residues). The span at 625–637 (QDTASSLQSDSTT) shows a compositional bias: polar residues. Threonine 653 is modified (phosphothreonine). Phosphoserine occurs at positions 655, 778, 780, 1044, 1049, 1077, 1087, 1179, and 1182. Disordered regions lie at residues 1033–1061 (SVVR…VPAG) and 1075–1099 (SPSG…QGPV). A compositionally biased stretch (polar residues) spans 1086-1099 (VSPSSDQRVTQGPV). The tract at residues 1152-1453 (VSGDFSEAVS…GPKETSFTFQ (302 aa)) is interaction with TLN1 and VCL. The interval 1212-1231 (ADISGSGRMPGSERSHTEKE) is disordered. The segment covering 1222 to 1231 (GSERSHTEKE) has biased composition (basic and acidic residues). The interval 1242 to 1557 (AQVGGNFATE…DNEEEEEEEG (316 aa)) is interaction with DMD and UTRN. A Phosphoserine modification is found at serine 1425. Arginine 1481 carries the post-translational modification Omega-N-methylarginine. The segment at 1491–1519 (DERVASTGSGASPGDAHQAPGEKGTEQAG) is disordered.

It belongs to the intermediate filament family. In terms of assembly, interacts with DES, DMD, DTNA, TLN1, UTRN and VCL. Isoform 1 and isoform 2 interact with GFAP and VIM. As to expression, isoform 2 and isoform 3 are detected in adult skeletal muscle, heart and bladder, whereas isoform 1 is only detected in adult bladder (at protein level).

It is found in the cytoplasm. The protein localises to the cytoskeleton. The protein resides in the cell junction. It localises to the adherens junction. Its function is as follows. Type-VI intermediate filament (IF) which plays an important cytoskeletal role within the muscle cell cytoskeleton. It forms heteromeric IFs with desmin and/or vimentin, and via its interaction with cytoskeletal proteins alpha-dystrobrevin, dystrophin, talin-1, utrophin and vinculin, is able to link these heteromeric IFs to adherens-type junctions, such as to the costameres, neuromuscular junctions, and myotendinous junctions within striated muscle cells. The polypeptide is Synemin (Mus musculus (Mouse)).